Here is a 322-residue protein sequence, read N- to C-terminus: Methionyl-tRNA formyltransferase (322 aa).

113-116 (SLLP) lines the (6S)-5,6,7,8-tetrahydrofolate pocket.

The protein belongs to the Fmt family.

The catalysed reaction is L-methionyl-tRNA(fMet) + (6R)-10-formyltetrahydrofolate = N-formyl-L-methionyl-tRNA(fMet) + (6S)-5,6,7,8-tetrahydrofolate + H(+). In terms of biological role, attaches a formyl group to the free amino group of methionyl-tRNA(fMet). The formyl group appears to play a dual role in the initiator identity of N-formylmethionyl-tRNA by promoting its recognition by IF2 and preventing the misappropriation of this tRNA by the elongation apparatus. In Bacteroides thetaiotaomicron (strain ATCC 29148 / DSM 2079 / JCM 5827 / CCUG 10774 / NCTC 10582 / VPI-5482 / E50), this protein is Methionyl-tRNA formyltransferase.